The sequence spans 156 residues: Small ribosomal subunit protein uS7 (156 aa).

The protein belongs to the universal ribosomal protein uS7 family. As to quaternary structure, part of the 30S ribosomal subunit. Contacts proteins S9 and S11.

Its function is as follows. One of the primary rRNA binding proteins, it binds directly to 16S rRNA where it nucleates assembly of the head domain of the 30S subunit. Is located at the subunit interface close to the decoding center, probably blocks exit of the E-site tRNA. This Kocuria rhizophila (strain ATCC 9341 / DSM 348 / NBRC 103217 / DC2201) protein is Small ribosomal subunit protein uS7.